Reading from the N-terminus, the 805-residue chain is Cation channel sperm-associated auxiliary subunit delta (805 aa).

A signal peptide spans 1–16; sequence MLVLMLAAAVATMVRA. Residues 17–723 are Extracellular-facing; that stretch reads HTLCRVHTVR…ALPVTKFQPL (707 aa). Intrachain disulfides connect cysteine 20/cysteine 366, cysteine 56/cysteine 143, cysteine 142/cysteine 149, cysteine 384/cysteine 493, cysteine 507/cysteine 701, cysteine 522/cysteine 569, and cysteine 621/cysteine 651. N-linked (GlcNAc...) asparagine glycosylation is found at asparagine 227, asparagine 419, asparagine 469, asparagine 535, and asparagine 627. A helical transmembrane segment spans residues 724–745; it reads LTILLMVTTTLLTAWLAYAIPK. At 746 to 805 the chain is on the cytoplasmic side; that stretch reads QLRSEKGQRLLGFCYQILQLCLGVCFCTWLRGKLRQWLRPRRVKDQNRGKVRVAQKHPET.

The protein belongs to the CATSPERD family. Component of the CatSper complex or CatSpermasome composed of the core pore-forming members CATSPER1, CATSPER2, CATSPER3 and CATSPER4 as well as auxiliary members CATSPERB, CATSPERG2, CATSPERD, CATSPERE, CATSPERZ, C2CD6/CATSPERT, SLCO6C1, TMEM249, TMEM262 and EFCAB9. HSPA1 may be an additional auxiliary complex member. The core complex members CATSPER1, CATSPER2, CATSPER3 and CATSPER4 form a heterotetrameric channel. The auxiliary CATSPERB, CATSPERG2, CATSPERD and CATSPERE subunits form a pavilion-like structure over the pore which stabilizes the complex through interactions with CATSPER4, CATSPER3, CATSPER1 and CATSPER2 respectively. SLCO6C1 interacts with CATSPERE and TMEM262/CATSPERH interacts with CATSPERB, further stabilizing the complex. C2CD6/CATSPERT interacts at least with CATSPERD and is required for targeting the CatSper complex in the flagellar membrane. Testis-specific.

The protein resides in the cell projection. It localises to the cilium. It is found in the flagellum membrane. Its function is as follows. Auxiliary component of the CatSper complex, a complex involved in sperm cell hyperactivation. Sperm cell hyperactivation is needed for sperm motility which is essential late in the preparation of sperm for fertilization. Required for CATSPER1 stability before intraflagellar transport and/or incorporation of the CatSper complex channel into the flagellar membrane. The polypeptide is Cation channel sperm-associated auxiliary subunit delta (Mus musculus (Mouse)).